The chain runs to 528 residues: Cytochrome P450 monooxygenase ppsD (528 aa).

A helical membrane pass occupies residues 2 to 21; sequence LVLVSLVLCLTGFCLLQWAL. Asparagine 137 carries N-linked (GlcNAc...) asparagine glycosylation. Cysteine 441 contributes to the heme binding site. Asparagine 450 and asparagine 463 each carry an N-linked (GlcNAc...) asparagine glycan.

This sequence belongs to the cytochrome P450 family. Requires heme as cofactor.

It is found in the membrane. Functionally, cytochrome P450 monooxygenase; part of the gene cluster that mediates the biosynthesis of 2,4'-dihydroxy-3'-methoxypropiophenone. The first step of the pathway is the conversion of acetate into acetyl-CoA by the acyl-CoA ligase ppsA. Acetyl-CoA is then used as a starter unit by the polyketide synthase ppsB and condensed with 4 malonyl-CoA unit to produce the pentaketide backbone. During polyketide extension, the polykedite chain is probably reduced and dehydrated by the KR and PT domains, respectively. O-methylation seems to be catalyzed by an unknown methyltransferase rather than by the CMeT domain of ppsB. Two hydroxylations and one further decarboxylation step catalyzed by yet unknown enzymes are then required to yield 4'-hydroxy-3'-methoxypropiophenone. PpsC functions as a carrier protein to transport 4'-hydroxy-3'-methoxypropiophenone to a specific cell compartment in which 4'-hydroxy-3'-methoxypropiophenone is hydroxylated to 2,4'-dihydroxy-3'-methoxypropiophenone by a still to be identified enzyme. This is Cytochrome P450 monooxygenase ppsD from Aspergillus oryzae (strain ATCC 42149 / RIB 40) (Yellow koji mold).